A 176-amino-acid polypeptide reads, in one-letter code: Large ribosomal subunit protein uL6 (176 aa).

It belongs to the universal ribosomal protein uL6 family. Part of the 50S ribosomal subunit.

Its function is as follows. This protein binds to the 23S rRNA, and is important in its secondary structure. It is located near the subunit interface in the base of the L7/L12 stalk, and near the tRNA binding site of the peptidyltransferase center. This is Large ribosomal subunit protein uL6 from Paraburkholderia phytofirmans (strain DSM 17436 / LMG 22146 / PsJN) (Burkholderia phytofirmans).